We begin with the raw amino-acid sequence, 404 residues long: Cysteine desulfurase IscS (404 aa).

Residues 75–76, Asn155, Gln183, and 203–205 contribute to the pyridoxal 5'-phosphate site; these read AT and SAH. Position 206 is an N6-(pyridoxal phosphate)lysine (Lys206). Thr243 lines the pyridoxal 5'-phosphate pocket. Catalysis depends on Cys328, which acts as the Cysteine persulfide intermediate. A [2Fe-2S] cluster-binding site is contributed by Cys328.

It belongs to the class-V pyridoxal-phosphate-dependent aminotransferase family. NifS/IscS subfamily. As to quaternary structure, homodimer. Forms a heterotetramer with IscU, interacts with other sulfur acceptors. Pyridoxal 5'-phosphate serves as cofactor.

Its subcellular location is the cytoplasm. It carries out the reaction (sulfur carrier)-H + L-cysteine = (sulfur carrier)-SH + L-alanine. It functions in the pathway cofactor biosynthesis; iron-sulfur cluster biosynthesis. Master enzyme that delivers sulfur to a number of partners involved in Fe-S cluster assembly, tRNA modification or cofactor biosynthesis. Catalyzes the removal of elemental sulfur atoms from cysteine to produce alanine. Functions as a sulfur delivery protein for Fe-S cluster synthesis onto IscU, an Fe-S scaffold assembly protein, as well as other S acceptor proteins. The polypeptide is Cysteine desulfurase IscS (Aeromonas hydrophila subsp. hydrophila (strain ATCC 7966 / DSM 30187 / BCRC 13018 / CCUG 14551 / JCM 1027 / KCTC 2358 / NCIMB 9240 / NCTC 8049)).